The following is a 466-amino-acid chain: 3-isopropylmalate dehydratase large subunit (466 aa).

[4Fe-4S] cluster contacts are provided by C347, C407, and C410.

The protein belongs to the aconitase/IPM isomerase family. LeuC type 1 subfamily. As to quaternary structure, heterodimer of LeuC and LeuD. Requires [4Fe-4S] cluster as cofactor.

It catalyses the reaction (2R,3S)-3-isopropylmalate = (2S)-2-isopropylmalate. It participates in amino-acid biosynthesis; L-leucine biosynthesis; L-leucine from 3-methyl-2-oxobutanoate: step 2/4. In terms of biological role, catalyzes the isomerization between 2-isopropylmalate and 3-isopropylmalate, via the formation of 2-isopropylmaleate. The protein is 3-isopropylmalate dehydratase large subunit of Escherichia coli O17:K52:H18 (strain UMN026 / ExPEC).